We begin with the raw amino-acid sequence, 289 residues long: Glycine--tRNA ligase alpha subunit (289 aa).

This sequence belongs to the class-II aminoacyl-tRNA synthetase family. As to quaternary structure, tetramer of two alpha and two beta subunits.

It localises to the cytoplasm. It catalyses the reaction tRNA(Gly) + glycine + ATP = glycyl-tRNA(Gly) + AMP + diphosphate. The sequence is that of Glycine--tRNA ligase alpha subunit from Rickettsia akari (strain Hartford).